Here is a 344-residue protein sequence, read N- to C-terminus: MLMFDPVPVKQEAMDPVSVSFPSNYIESMKPNKYGVIYSTPLPDKFFQTPEGLTHGIQVEPVDLTVNKRGSPPAAGGSPSSLKFPSHRRASPGLSMPSSSPPIKKYSPPSPGVQPFGVPLSMPPVMAAALSRHGIRSPGILPVIQPVVVQPVPFMYTSHLQQPLMVSLSEEMDNSNSGMPVPVIESYEKPLLQKKIKIEPGIEPQRTDYYPEEMSPPLMNPVSPPQALLQENHPSVIVQPGKRPLPVESPDTQRKRRIHRCDYDGCNKVYTKSSHLKAHRRTHTGEKPYKCTWEGCTWKFARSDELTRHFRKHTGIKPFQCPDCDRSFSRSDHLALHRKRHMLV.

Residues M1–A74 are repressor domain. A Glycyl lysine isopeptide (Lys-Gly) (interchain with G-Cter in SUMO) cross-link involves residue K10. The 9aaTAD; inactive signature appears at E60 to K68. The CTBP-binding motif motif lies at P61–T65. Residues V66–P111 are disordered. K68 is covalently cross-linked (Glycyl lysine isopeptide (Lys-Gly) (interchain with G-Cter in SUMO2)). 2 stretches are compositionally biased toward low complexity: residues G70 to S81 and S91 to S107. S71, S91, S100, S107, and S110 each carry phosphoserine. K195 participates in a covalent cross-link: Glycyl lysine isopeptide (Lys-Gly) (interchain with G-Cter in SUMO2). K197 participates in a covalent cross-link: Glycyl lysine isopeptide (Lys-Gly) (interchain with G-Cter in SUMO); alternate. Residue K197 forms a Glycyl lysine isopeptide (Lys-Gly) (interchain with G-Cter in SUMO2); alternate linkage. Residues S215, S223, and S249 each carry the phosphoserine modification. Residues S235–R254 form a disordered region. 3 C2H2-type zinc fingers span residues H259–H283, Y289–H313, and F319–H341.

The protein belongs to the krueppel C2H2-type zinc-finger protein family. As to quaternary structure, monomer. In terms of processing, sumoylated with SUMO1. Sumoylation is enhanced by PIAS1, PIAS2alpha and PIAS2beta, and PIAS4, but not by Pc2. Enhances transcriptional repression, but has no effect on DNA binding. Sumoylation on Lys-197 is the major site. As to expression, in 8.5 day embryos, expressed in midbrain, anterior hindbrain and ventral forebrain. In 9 day embryos, expressed throughout ventral anterior half of embryo including midbrain-hindbrain junction, ventral midbrain, diencephalon and forebrain. At 10.5 days, distribution is more widespread with expression also found in developing limb buds. Widely expressed in the adult.

The protein localises to the nucleus. In terms of biological role, binds to the CACCC box of erythroid cell-expressed genes. May play a role in hematopoiesis. This chain is Krueppel-like factor 3 (Klf3), found in Mus musculus (Mouse).